A 436-amino-acid chain; its full sequence is Transcription factor Sox-10 (436 aa).

Disordered regions lie at residues 1–55 (MSDD…ERFP), 145–183 (RLRM…AEGG), 195–257 (HLDH…DFGN), 322–346 (PQTD…QPST), and 413–436 (SPSV…LSRP). Lysine 44 is covalently cross-linked (Glycyl lysine isopeptide (Lys-Gly) (interchain with G-Cter in SUMO)). The tract at residues 48-88 (DSEDERFPVCIREAVSQVLSGYDWTLVPMPVRVNGGSKSKP) is dimerization (DIM). Positions 90–158 (VKRPMNAFMV…QHKKDHPDYK (69 aa)) form a DNA-binding region, HMG box. Over residues 145 to 159 (RLRMQHKKDHPDYKY) the composition is skewed to basic and acidic residues. Composition is skewed to polar residues over residues 205–215 (SDGNSEHSAGQ) and 331–346 (KTES…QPST). Residues 209–295 (SEHSAGQSHG…NGHAGHPSHI (87 aa)) are transactivation domain (TAM). Residues 327–436 (KAQVKTESSS…QPVYTTLSRP (110 aa)) are transactivation domain (TAC). Lysine 331 is covalently cross-linked (Glycyl lysine isopeptide (Lys-Gly) (interchain with G-Cter in SUMO)).

Interacts with the sumoylation factors ube2i/ubc9 and sumo1. Sumoylated.

It localises to the cytoplasm. Its subcellular location is the nucleus. In terms of biological role, acts early in neural crest formation, functioning redundantly with the other group E Sox factors sox8 and sox9 to induce neural crest progenitors. Acts downstream of wnt-signaling at the neural plate border. Involved in the specification of neural crest progenitors fated to form the pigment cell lineage. The chain is Transcription factor Sox-10 from Xenopus tropicalis (Western clawed frog).